A 580-amino-acid chain; its full sequence is N(6)-adenosine-methyltransferase catalytic subunit METTL3 (580 aa).

The interval Met1–Pro70 is disordered. Ser2 is modified (N-acetylserine; alternate). At Ser2 the chain carries Phosphoserine; alternate. Positions Gln28–Asn37 are enriched in basic and acidic residues. Residues Ser43, Ser48, and Ser50 each carry the phosphoserine modification. Glycyl lysine isopeptide (Lys-Gly) (interchain with G-Cter in SUMO1) cross-links involve residues Lys177, Lys211, Lys212, and Lys215. Residues Leu198–Ser219 are disordered. A Nuclear localization signal motif is present at residues Ala210–Lys215. Phosphoserine is present on residues Ser219 and Ser243. At Thr348 the chain carries Phosphothreonine. Ser350 is modified (phosphoserine). Residues Asp377–Ile378 and Asp395 each bind S-adenosyl-L-methionine. A gate loop 1 region spans residues Pro396–Thr410. 2 interaction with METTL14 regions span residues Glu450 to Glu454 and Gln464 to Lys480. The segment at Gln462–Gly479 is interphase loop. A positively charged region required for RNA-binding region spans residues Arg465–His478. Residues Val507–Asp515 are gate loop 2. S-adenosyl-L-methionine-binding positions include Lys513, Arg536 to Asn539, and Asn549 to Gln550.

It belongs to the MT-A70-like family. Heterodimer; heterodimerizes with METTL14 to form an antiparallel heterodimer that constitutes an active methyltransferase. Component of the WMM complex, a N6-methyltransferase complex composed of a catalytic subcomplex, named MAC, and of an associated subcomplex, named MACOM. The MAC subcomplex is composed of METTL3 and METTL14. The MACOM subcomplex is composed of WTAP, ZC3H13, CBLL1/HAKAI, VIRMA, and, in some cases of RBM15 (RBM15 or RBM15B). Interacts with NCBP1/CBP80. Interacts with EIF4E. Interacts with EIF3B. Sumoylation inhibits the N6-adenosine-methyltransferase activity. Sumoylation does not affect subcellular location or interaction with METTL14. Desumoylated by SENP1. Widely expressed at low level. Expressed in spleen, thymus, prostate, testis, ovary, small intestine, colon and peripheral blood leukocytes.

The protein localises to the nucleus. It is found in the nucleus speckle. It localises to the cytoplasm. The catalysed reaction is an adenosine in mRNA + S-adenosyl-L-methionine = an N(6)-methyladenosine in mRNA + S-adenosyl-L-homocysteine + H(+). Methyltransferase activity is regulated by miRNAs via a sequence pairing mechanism. Methyltransferase activity is inhibited by sumoylation. Its function is as follows. The METTL3-METTL14 heterodimer forms a N6-methyltransferase complex that methylates adenosine residues at the N(6) position of some RNAs and regulates various processes such as the circadian clock, differentiation of embryonic and hematopoietic stem cells, cortical neurogenesis, response to DNA damage, differentiation of T-cells and primary miRNA processing. In the heterodimer formed with METTL14, METTL3 constitutes the catalytic core. N6-methyladenosine (m6A), which takes place at the 5'-[AG]GAC-3' consensus sites of some mRNAs, plays a role in mRNA stability, processing, translation efficiency and editing. M6A acts as a key regulator of mRNA stability: methylation is completed upon the release of mRNA into the nucleoplasm and promotes mRNA destabilization and degradation. In embryonic stem cells (ESCs), m6A methylation of mRNAs encoding key naive pluripotency-promoting transcripts results in transcript destabilization, promoting differentiation of ESCs. M6A regulates the length of the circadian clock: acts as an early pace-setter in the circadian loop by putting mRNA production on a fast-track for facilitating nuclear processing, thereby providing an early point of control in setting the dynamics of the feedback loop. M6A also regulates circadian regulation of hepatic lipid metabolism. M6A regulates spermatogonial differentiation and meiosis and is essential for male fertility and spermatogenesis. Also required for oogenesis. Involved in the response to DNA damage: in response to ultraviolet irradiation, METTL3 rapidly catalyzes the formation of m6A on poly(A) transcripts at DNA damage sites, leading to the recruitment of POLK to DNA damage sites. M6A is also required for T-cell homeostasis and differentiation: m6A methylation of transcripts of SOCS family members (SOCS1, SOCS3 and CISH) in naive T-cells promotes mRNA destabilization and degradation, promoting T-cell differentiation. Inhibits the type I interferon response by mediating m6A methylation of IFNB. M6A also takes place in other RNA molecules, such as primary miRNA (pri-miRNAs). Mediates m6A methylation of Xist RNA, thereby participating in random X inactivation: m6A methylation of Xist leads to target YTHDC1 reader on Xist and promote transcription repression activity of Xist. M6A also regulates cortical neurogenesis: m6A methylation of transcripts related to transcription factors, neural stem cells, the cell cycle and neuronal differentiation during brain development promotes their destabilization and decay, promoting differentiation of radial glial cells. METTL3 mediates methylation of pri-miRNAs, marking them for recognition and processing by DGCR8. Acts as a positive regulator of mRNA translation independently of the methyltransferase activity: promotes translation by interacting with the translation initiation machinery in the cytoplasm. Its overexpression in a number of cancer cells suggests that it may participate in cancer cell proliferation by promoting mRNA translation. During human coronavirus SARS-CoV-2 infection, adds m6A modifications in SARS-CoV-2 RNA leading to decreased RIGI binding and subsequently dampening the sensing and activation of innate immune responses. The protein is N(6)-adenosine-methyltransferase catalytic subunit METTL3 of Homo sapiens (Human).